The following is a 456-amino-acid chain: PTS system sucrose-specific EIIBC component (456 aa).

In terms of domain architecture, PTS EIIB type-1 spans 4–87; it reads EQISCSLLPL…TQAAGISESS (84 aa). Residue Cys26 is the Phosphocysteine intermediate; for EIIB activity of the active site. The PTS EIIC type-1 domain occupies 107 to 456; that stretch reads RLLSNIFVPI…LVLKYKTDAE (350 aa). Helical transmembrane passes span 112–132, 144–164, 181–201, 213–233, 247–267, 288–308, 329–349, 360–380, 388–408, and 428–448; these read IFVPIIPAIVASGLLMGLLGM, AIYIMLDMCSSAAFIILPILI, TLGGILTHPALTNAWGVAAGF, MIGYQGTVFPVLLAVWFMSIV, LILTPFLTVIISGFIALLIIG, AGWLAGLLFGGLYSVIVITGI, FLLPIWAMANVAQGGACLAVW, ITLPSAFSAMLGITEAAIFGI, FIAALIGGAAGGAWVVSVHVY, and LLNYIIGMVIAFGVAFTVSLV.

The protein resides in the cell inner membrane. It carries out the reaction N(pros)-phospho-L-histidyl-[protein](out) + sucrose = sucrose 6(G)-phosphate(in) + L-histidyl-[protein]. In terms of biological role, the phosphoenolpyruvate-dependent sugar phosphotransferase system (sugar PTS), a major carbohydrate active transport system, catalyzes the phosphorylation of incoming sugar substrates concomitantly with their translocation across the cell membrane. This system is involved in sucrose transport. In Salmonella typhimurium, this protein is PTS system sucrose-specific EIIBC component.